A 241-amino-acid polypeptide reads, in one-letter code: Ribose-5-phosphate isomerase A (241 aa).

Residues 29–32 (TGTT), 84–87 (DGAD), and 97–100 (KGGG) each bind substrate. The Proton acceptor role is filled by Glu-106. Substrate is bound at residue Lys-124.

The protein belongs to the ribose 5-phosphate isomerase family. In terms of assembly, homodimer.

The catalysed reaction is aldehydo-D-ribose 5-phosphate = D-ribulose 5-phosphate. It participates in carbohydrate degradation; pentose phosphate pathway; D-ribose 5-phosphate from D-ribulose 5-phosphate (non-oxidative stage): step 1/1. Functionally, catalyzes the reversible conversion of ribose-5-phosphate to ribulose 5-phosphate. The protein is Ribose-5-phosphate isomerase A of Thermoplasma volcanium (strain ATCC 51530 / DSM 4299 / JCM 9571 / NBRC 15438 / GSS1).